Here is a 311-residue protein sequence, read N- to C-terminus: tRNA pseudouridine synthase B (311 aa).

His-43 contacts substrate. The Nucleophile role is filled by Asp-48. Substrate contacts are provided by Tyr-76, Tyr-179, and Leu-200.

Belongs to the pseudouridine synthase TruB family. Type 1 subfamily.

It carries out the reaction uridine(55) in tRNA = pseudouridine(55) in tRNA. Functionally, responsible for synthesis of pseudouridine from uracil-55 in the psi GC loop of transfer RNAs. The chain is tRNA pseudouridine synthase B from Sodalis glossinidius (strain morsitans).